Reading from the N-terminus, the 51-residue chain is Sperm protamine P1 (51 aa).

2 disulfide bridges follow: Cys-7-Cys-15 and Cys-38-Cys-48.

It belongs to the protamine P1 family. In terms of assembly, cross-linked by interchain disulfide bonds around the DNA-helix. Post-translationally, phosphorylated by SRPK1. Testis.

It localises to the nucleus. The protein resides in the chromosome. Its function is as follows. Protamines substitute for histones in the chromatin of sperm during the haploid phase of spermatogenesis. They compact sperm DNA into a highly condensed, stable and inactive complex. This is Sperm protamine P1 (Prm1) from Mus musculus (Mouse).